Consider the following 66-residue polypeptide: MPLPKIQDIQDFTDKEIEEKIIKLKKEIFDLKLKQATRQNVRSHLFKHKKHQLAQLLTIKKDSNYV.

This sequence belongs to the universal ribosomal protein uL29 family.

The protein resides in the plastid. Its subcellular location is the chloroplast. The chain is Large ribosomal subunit protein uL29c from Gracilaria tenuistipitata var. liui (Red alga).